The sequence spans 194 residues: Large ribosomal subunit protein uL6m (194 aa).

This sequence belongs to the universal ribosomal protein uL6 family.

It is found in the mitochondrion. The protein is Large ribosomal subunit protein uL6m (RPL6) of Prototheca wickerhamii.